The primary structure comprises 275 residues: Large ribosomal subunit protein uL2 (275 aa).

Disordered stretches follow at residues 38 to 59 (TRGSGRNNNGHITVRHRGGGHK) and 223 to 275 (VAMN…RKRK). Basic residues predominate over residues 50 to 59 (TVRHRGGGHK). The span at 229–244 (DHPHGGGEGRTGEARE) shows a compositional bias: basic and acidic residues.

The protein belongs to the universal ribosomal protein uL2 family. As to quaternary structure, part of the 50S ribosomal subunit. Forms a bridge to the 30S subunit in the 70S ribosome.

Functionally, one of the primary rRNA binding proteins. Required for association of the 30S and 50S subunits to form the 70S ribosome, for tRNA binding and peptide bond formation. It has been suggested to have peptidyltransferase activity; this is somewhat controversial. Makes several contacts with the 16S rRNA in the 70S ribosome. The chain is Large ribosomal subunit protein uL2 from Bordetella bronchiseptica (strain ATCC BAA-588 / NCTC 13252 / RB50) (Alcaligenes bronchisepticus).